Here is a 183-residue protein sequence, read N- to C-terminus: Ferredoxin-2, mitochondrial (183 aa).

Residues 1–52 (MAASVAWGGVNAGFLLRAARGAWWSRPGGFWGSGEAAAPAIARKFRATGSRP) constitute a mitochondrion transit peptide. The 2Fe-2S ferredoxin-type domain occupies 68–170 (VNVVFVDRSG…GAEFTLPKIT (103 aa)). Cys-105, Cys-111, Cys-114, and Cys-151 together coordinate [2Fe-2S] cluster.

This sequence belongs to the adrenodoxin/putidaredoxin family. In terms of assembly, component of the mitochondrial core iron-sulfur cluster (ISC) complex composed of NFS1, LYRM4, NDUFAB1, ISCU, FXN, and FDX2; this complex is a heterohexamer containing two copies of each monomer. Form a heterodimer complex with NFS1. Interacts (in both their reduced and oxidized states) with the cysteine desulfurase (NFS1:LYRM4) complex; this interaction stimulates cysteine desulfurase activity, and serves as a reductant for Fe-S cluster assembly. [2Fe-2S] cluster is required as a cofactor.

The protein localises to the mitochondrion. The protein resides in the mitochondrion matrix. Electron donor, of the core iron-sulfur cluster (ISC) assembly complex, that acts to reduce the persulfide into sulfide during [2Fe-2S] clusters assembly on the scaffolding protein ISCU. The core iron-sulfur cluster (ISC) assembly complex is involved in the de novo synthesis of a [2Fe-2S] cluster, the first step of the mitochondrial iron-sulfur protein biogenesis. This process is initiated by the cysteine desulfurase complex (NFS1:LYRM4:NDUFAB1) that produces persulfide which is delivered on the scaffold protein ISCU in a FXN-dependent manner. Then this complex is stabilized by FDX2 which provides reducing equivalents to accomplish the [2Fe-2S] cluster assembly. Finally, the [2Fe-2S] cluster is transferred from ISCU to chaperone proteins, including HSCB, HSPA9 and GLRX5. Essential for coenzyme Q biosynthesis: together with FDXR, transfers the electrons required for the hydroxylation reaction performed by COQ6. The sequence is that of Ferredoxin-2, mitochondrial from Bos taurus (Bovine).